A 76-amino-acid chain; its full sequence is Sulfur carrier protein TusA (76 aa).

C14 (cysteine persulfide intermediate) is an active-site residue.

It belongs to the sulfur carrier protein TusA family. Interacts with IscS.

It localises to the cytoplasm. Its pathway is tRNA modification. Functionally, sulfur carrier protein involved in sulfur trafficking in the cell. Part of a sulfur-relay system required for 2-thiolation during synthesis of 2-thiouridine of the modified wobble base 5-methylaminomethyl-2-thiouridine (mnm(5)s(2)U) in tRNA. Interacts with IscS and stimulates its cysteine desulfurase activity. Accepts an activated sulfur from IscS, which is then transferred to TusD, and thus determines the direction of sulfur flow from IscS to 2-thiouridine formation. Also appears to be involved in sulfur transfer for the biosynthesis of molybdopterin. In Buchnera aphidicola subsp. Acyrthosiphon pisum (strain Tuc7), this protein is Sulfur carrier protein TusA.